Reading from the N-terminus, the 129-residue chain is Large ribosomal subunit protein bL19 (129 aa).

Belongs to the bacterial ribosomal protein bL19 family.

In terms of biological role, this protein is located at the 30S-50S ribosomal subunit interface and may play a role in the structure and function of the aminoacyl-tRNA binding site. The polypeptide is Large ribosomal subunit protein bL19 (Burkholderia mallei (strain NCTC 10247)).